The primary structure comprises 286 residues: Bifunctional protein FolD (286 aa).

NADP(+) contacts are provided by residues 166 to 168 (GAS) and isoleucine 232.

This sequence belongs to the tetrahydrofolate dehydrogenase/cyclohydrolase family. Homodimer.

The catalysed reaction is (6R)-5,10-methylene-5,6,7,8-tetrahydrofolate + NADP(+) = (6R)-5,10-methenyltetrahydrofolate + NADPH. The enzyme catalyses (6R)-5,10-methenyltetrahydrofolate + H2O = (6R)-10-formyltetrahydrofolate + H(+). Its pathway is one-carbon metabolism; tetrahydrofolate interconversion. Functionally, catalyzes the oxidation of 5,10-methylenetetrahydrofolate to 5,10-methenyltetrahydrofolate and then the hydrolysis of 5,10-methenyltetrahydrofolate to 10-formyltetrahydrofolate. In Vibrio campbellii (strain ATCC BAA-1116), this protein is Bifunctional protein FolD.